Reading from the N-terminus, the 457-residue chain is UDP-N-acetyl-alpha-D-muramoyl-L-alanyl-L-glutamate epimerase (457 aa).

It belongs to the MurL family.

It catalyses the reaction UDP-N-acetyl-alpha-D-muramoyl-L-alanyl-L-glutamate + ATP + H2O = UDP-N-acetyl-alpha-D-muramoyl-L-alanyl-D-glutamate + AMP + diphosphate + H(+). The protein operates within cell wall biogenesis; peptidoglycan biosynthesis. Its function is as follows. Cell wall formation. Catalyzes epimerization of the terminal L-glutamate in UDP-N-acetyl-alpha-D-muramoyl-L-alanyl-L-glutamate. The polypeptide is UDP-N-acetyl-alpha-D-muramoyl-L-alanyl-L-glutamate epimerase (Salinispora tropica (strain ATCC BAA-916 / DSM 44818 / JCM 13857 / NBRC 105044 / CNB-440)).